A 194-amino-acid polypeptide reads, in one-letter code: Ras-like protein rasS (194 aa).

10–17 contacts GTP; sequence GPGGVGKS. An Effector region motif is present at residues 32-40; it reads YDPTLEDSY. GTP-binding positions include 57–61 and 116–119; these read DTAGQ and NKCD. Residues 168-194 are disordered; that stretch reads RQSNQHSNSQEQNTDQPIKKKKSCNLL. Residues 169–180 show a composition bias toward low complexity; it reads QSNQHSNSQEQN. Cysteine methyl ester is present on Cys191. The S-geranylgeranyl cysteine moiety is linked to residue Cys191. Residues 192–194 constitute a propeptide, removed in mature form; that stretch reads NLL.

The protein belongs to the small GTPase superfamily. Ras family.

Its subcellular location is the cell membrane. The catalysed reaction is GTP + H2O = GDP + phosphate + H(+). In terms of biological role, ras proteins bind GDP/GTP and possess intrinsic GTPase activity. The polypeptide is Ras-like protein rasS (rasS) (Dictyostelium discoideum (Social amoeba)).